The following is a 38-amino-acid chain: Large ribosomal subunit protein bL36 (38 aa).

The protein belongs to the bacterial ribosomal protein bL36 family.

The protein is Large ribosomal subunit protein bL36 of Proteus mirabilis (strain HI4320).